A 289-amino-acid chain; its full sequence is BTB/POZ domain-containing protein KCTD7 (289 aa).

The segment at 1-40 (MVVVTGREPDSRRPDGAMSSSDAEDDFLEPATPTATQAGH) is disordered. One can recognise a BTB domain in the interval 53 to 141 (VPLNIGGAHF…YAIGPLLEQL (89 aa)).

In terms of assembly, interacts with CUL3.

It localises to the cell membrane. The protein resides in the cytoplasm. The protein localises to the cytosol. Its function is as follows. May be involved in the control of excitability of cortical neurons. The sequence is that of BTB/POZ domain-containing protein KCTD7 (KCTD7) from Bos taurus (Bovine).